The chain runs to 200 residues: Elongation factor Ts (200 aa).

An involved in Mg(2+) ion dislocation from EF-Tu region spans residues 83 to 86 (TDFA).

It belongs to the EF-Ts family.

The protein localises to the cytoplasm. In terms of biological role, associates with the EF-Tu.GDP complex and induces the exchange of GDP to GTP. It remains bound to the aminoacyl-tRNA.EF-Tu.GTP complex up to the GTP hydrolysis stage on the ribosome. This chain is Elongation factor Ts, found in Syntrophobacter fumaroxidans (strain DSM 10017 / MPOB).